A 186-amino-acid polypeptide reads, in one-letter code: RNA polymerase sigma factor NccH (186 aa).

The Polymerase core binding signature appears at 49–62 (DIVQDTFIAAWHAL). A DNA-binding region (H-T-H motif) is located at residues 152–171 (HPEAAMALGTSAKAVESRVA).

This sequence belongs to the sigma-70 factor family. ECF subfamily.

Its function is as follows. Sigma factors are initiation factors that promote the attachment of RNA polymerase to specific initiation sites and are then released. This sigma factor regulates the genes for a membrane-located efflux system that confers resistance to nickel, cobalt and cadmium. This chain is RNA polymerase sigma factor NccH (nccH), found in Alcaligenes xylosoxydans xylosoxydans (Achromobacter xylosoxidans).